Reading from the N-terminus, the 145-residue chain is Transcriptional regulator SlyA (145 aa).

The region spanning 2–135 (ELPLGSDLAR…LALLVARLEK (134 aa)) is the HTH marR-type domain. The H-T-H motif DNA-binding region spans 49-72 (QIQLAKAIGIEQPSLVRTLDQLEE).

Belongs to the SlyA family. Homodimer.

Its function is as follows. Transcription regulator that can specifically activate or repress expression of target genes. This is Transcriptional regulator SlyA from Pectobacterium atrosepticum (strain SCRI 1043 / ATCC BAA-672) (Erwinia carotovora subsp. atroseptica).